Consider the following 99-residue polypeptide: Large ribosomal subunit protein P1 (99 aa).

As to quaternary structure, part of the 50S ribosomal subunit. Homodimer, it forms part of the ribosomal stalk which helps the ribosome interact with GTP-bound translation factors. Forms both a pentameric uL10/P0(P1)2(P1)2 and heptameric uL10/P0(P1)2(P1)2(P1)2 complex, where uL10/P0 forms an elongated spine to which the P1 dimers bind in a sequential fashion. The proportion of heptameric complexes increases during cell growth.

Its function is as follows. Forms part of the ribosomal stalk, playing a central role in the interaction of the ribosome with GTP-bound translation factors. This is Large ribosomal subunit protein P1 from Methanococcus vannielii.